The primary structure comprises 125 residues: Fluoride-specific ion channel FluC (125 aa).

Transmembrane regions (helical) follow at residues 4-24 (WLFV…ISEL), 35-55 (YGTL…FALI), 69-89 (LMVG…DTVV), and 103-123 (MGLN…LVAS). Na(+) contacts are provided by G75 and T78.

The protein belongs to the fluoride channel Fluc/FEX (TC 1.A.43) family.

Its subcellular location is the cell inner membrane. It carries out the reaction fluoride(in) = fluoride(out). Its activity is regulated as follows. Na(+) is not transported, but it plays an essential structural role and its presence is essential for fluoride channel function. Its function is as follows. Fluoride-specific ion channel. Important for reducing fluoride concentration in the cell, thus reducing its toxicity. The sequence is that of Fluoride-specific ion channel FluC from Aeromonas salmonicida (strain A449).